Consider the following 178-residue polypeptide: RNA pyrophosphohydrolase (178 aa).

Residues 18–171 (PYRPCVGLMV…KRKVYEQVVA (154 aa)) enclose the Nudix hydrolase domain. The Nudix box signature appears at 59-80 (GGIDKGEDPAQAALRELYEETG).

Belongs to the Nudix hydrolase family. RppH subfamily. The cofactor is a divalent metal cation.

In terms of biological role, accelerates the degradation of transcripts by removing pyrophosphate from the 5'-end of triphosphorylated RNA, leading to a more labile monophosphorylated state that can stimulate subsequent ribonuclease cleavage. The polypeptide is RNA pyrophosphohydrolase (Brucella melitensis biotype 2 (strain ATCC 23457)).